The following is a 104-amino-acid chain: DNA-binding transcriptional repressor TubR (104 aa).

2 consecutive DNA-binding regions (HTH) follow at residues 43-50 (KTAVAEMI) and 54-65 (KPTVFATVNSFY).

As to quaternary structure, homodimer. Binds to tubC DNA, the TubR-DNA complex binds to TubZ.

Its function is as follows. A DNA-binding protein that is part of the type III plasmid partition system used to ensure correct segregation of the pBtoxis plasmid. Cooperatively binds to the centromere-like site (tubC), which may seed filament formation by the TubZ polymerizing GTPase, stabilizing TubZ filaments. TubR-tubC complexes track the depolymerizing minus end of the filament, probably pulling plasmid within the cell. Required for plasmid replication. Negatively regulates levels of TubZ; its effect on RNA expression has not been shown. Specifically binds iterons, 12-bp imperfect direct repeats that function as a plasmid origin of replication. Four TubR dimers bind to tubC, forming an extended bent DNA-protein filament with protein wrapping helically around the outside of the DNA. The sequence is that of DNA-binding transcriptional repressor TubR from Bacillus thuringiensis subsp. israelensis.